We begin with the raw amino-acid sequence, 72 residues long: General transcription factor IIH subunit 5 (72 aa).

It belongs to the TFB5 family. As to quaternary structure, component of the 7-subunit TFIIH core complex composed of XPB/repB, XPD/repD, gtf2h1, gtf2h2, gtf2h3, gtf2h4 and gtf2h5, which is active in NER. The core complex associates with the 3-subunit CDK-activating kinase (CAK) module composed of cycH/cyclin H, cdk7 and mnat1 to form the 10-subunit holoenzyme (holo-TFIIH) active in transcription.

Its subcellular location is the nucleus. In terms of biological role, component of the general transcription and DNA repair factor IIH (TFIIH) core complex, which is involved in general and transcription-coupled nucleotide excision repair (NER) of damaged DNA and, when complexed to CAK, in RNA transcription by RNA polymerase II. In NER, TFIIH acts by opening DNA around the lesion to allow the excision of the damaged oligonucleotide and its replacement by a new DNA fragment. In transcription, TFIIH has an essential role in transcription initiation. When the pre-initiation complex (PIC) has been established, TFIIH is required for promoter opening and promoter escape. Phosphorylation of the C-terminal tail (CTD) of the largest subunit of RNA polymerase II by the kinase module CAK controls the initiation of transcription. The polypeptide is General transcription factor IIH subunit 5 (gtf2h5) (Dictyostelium discoideum (Social amoeba)).